Reading from the N-terminus, the 450-residue chain is uncharacterized protein (450 aa).

In terms of domain architecture, TRAM spans 1-58 (MAKGEIVTVKIEEMDFKGYGVGYCEGKPLKVRGGILGQRVAVRVKKGKKGRAEGEIVE). [4Fe-4S] cluster is bound by residues C71, C77, C80, and C159. S-adenosyl-L-methionine-binding residues include Q285, Y314, E335, and D380. C407 (nucleophile) is an active-site residue.

This sequence belongs to the class I-like SAM-binding methyltransferase superfamily. RNA M5U methyltransferase family.

This is an uncharacterized protein from Caldanaerobacter subterraneus subsp. tengcongensis (strain DSM 15242 / JCM 11007 / NBRC 100824 / MB4) (Thermoanaerobacter tengcongensis).